The following is a 305-amino-acid chain: Elongation factor Ts, mitochondrial (305 aa).

Belongs to the EF-Ts family.

It localises to the mitochondrion. Its function is as follows. Associates with the EF-Tu.GDP complex and induces the exchange of GDP to GTP. It remains bound to the aminoacyl-tRNA.EF-Tu.GTP complex up to the GTP hydrolysis stage on the ribosome. The polypeptide is Elongation factor Ts, mitochondrial (tsfm) (Danio rerio (Zebrafish)).